Here is a 257-residue protein sequence, read N- to C-terminus: Deoxyribose-phosphate aldolase (257 aa).

Residue Asp102 is the Proton donor/acceptor of the active site. Lys166 (schiff-base intermediate with acetaldehyde) is an active-site residue. The active-site Proton donor/acceptor is the Lys198.

Belongs to the DeoC/FbaB aldolase family. DeoC type 2 subfamily.

The protein localises to the cytoplasm. It catalyses the reaction 2-deoxy-D-ribose 5-phosphate = D-glyceraldehyde 3-phosphate + acetaldehyde. The protein operates within carbohydrate degradation; 2-deoxy-D-ribose 1-phosphate degradation; D-glyceraldehyde 3-phosphate and acetaldehyde from 2-deoxy-alpha-D-ribose 1-phosphate: step 2/2. Catalyzes a reversible aldol reaction between acetaldehyde and D-glyceraldehyde 3-phosphate to generate 2-deoxy-D-ribose 5-phosphate. This chain is Deoxyribose-phosphate aldolase, found in Shewanella frigidimarina (strain NCIMB 400).